Consider the following 318-residue polypeptide: EFTIFSLLFSLLLLNASAEQCGSQAGGALCAPGLCCSKFGWCGNTNDYCGPGNCQSQCPGGPGPSGDLGGVISNSMFDQMLNHRNDNACQGKNNFYSYNAFISAAGSFPGFGTTGDITARKREIAAFLAQTSHETTGGWPSAPDGPYAWGYCFLREQGSPGDYCTPSSQWPCAPGRKYFGRGPIQISHNYNYGPCGRAIGVDLLNNPDLVATDSVISFKSAIWFWMTPQSPKPSCHDVITGRWQPSGADQAANRVPGFGVITNIINGGLECGHGSDSRVQDRIGFYRRYCGILGVSPGDNLDCGNQRSFGNGLLVDTV.

A signal peptide spans glutamate 1–alanine 18. The Chitin-binding type-1 domain occupies glutamate 19–glycine 60. 7 disulfides stabilise this stretch: cysteine 21–cysteine 36, cysteine 30–cysteine 42, cysteine 35–cysteine 49, cysteine 54–cysteine 58, cysteine 89–cysteine 152, cysteine 164–cysteine 172, and cysteine 271–cysteine 303. The active-site Proton donor is glutamate 134. Positions glycine 312–valine 318 are cleaved as a propeptide — removed in mature form, vacuolar targeting.

It belongs to the glycosyl hydrolase 19 family. Chitinase class I subfamily.

Its subcellular location is the vacuole. The catalysed reaction is Random endo-hydrolysis of N-acetyl-beta-D-glucosaminide (1-&gt;4)-beta-linkages in chitin and chitodextrins.. Functionally, defense against chitin-containing fungal pathogens. This chain is Endochitinase 3 (CHTB3), found in Solanum tuberosum (Potato).